The sequence spans 400 residues: CinA-like protein (400 aa).

It belongs to the CinA family.

This chain is CinA-like protein, found in Escherichia coli (strain K12 / MC4100 / BW2952).